The following is a 468-amino-acid chain: Acetyl-CoA decarbonylase/synthase complex subunit gamma 1 (468 aa).

Residues 1–61 (MKINSPLEAY…YAKKLAELDR (61 aa)) form the 4Fe-4S domain. Positions 18, 21, 26, and 43 each coordinate [4Fe-4S] cluster.

In terms of assembly, heterodimer of delta and gamma chains. The ACDS complex is made up of alpha, epsilon, beta, gamma and delta chains with a probable stoichiometry of (alpha(2)epsilon(2))(4)-beta(8)-(gamma(1)delta(1))(8). Corrinoid serves as cofactor. The cofactor is [4Fe-4S] cluster.

It catalyses the reaction 5,6,7,8-tetrahydrosarcinapterin + methyl-Co(III)-[corrinoid Fe-S protein] = 5-methyltetrahydrosarcinapterin + Co(I)-[corrinoid Fe-S protein] + H(+). Its pathway is one-carbon metabolism; methanogenesis from acetate. Its function is as follows. Part of a complex that catalyzes the reversible cleavage of acetyl-CoA, allowing growth on acetate as sole source of carbon and energy. This is Acetyl-CoA decarbonylase/synthase complex subunit gamma 1 from Methanosarcina thermophila.